Reading from the N-terminus, the 119-residue chain is Large ribosomal subunit protein uL22 (119 aa).

Belongs to the universal ribosomal protein uL22 family. In terms of assembly, part of the 50S ribosomal subunit.

Functionally, this protein binds specifically to 23S rRNA; its binding is stimulated by other ribosomal proteins, e.g. L4, L17, and L20. It is important during the early stages of 50S assembly. It makes multiple contacts with different domains of the 23S rRNA in the assembled 50S subunit and ribosome. The globular domain of the protein is located near the polypeptide exit tunnel on the outside of the subunit, while an extended beta-hairpin is found that lines the wall of the exit tunnel in the center of the 70S ribosome. The chain is Large ribosomal subunit protein uL22 from Bifidobacterium longum (strain DJO10A).